A 101-amino-acid polypeptide reads, in one-letter code: Small ribosomal subunit protein uS14 (101 aa).

It belongs to the universal ribosomal protein uS14 family. In terms of assembly, part of the 30S ribosomal subunit. Contacts proteins S3 and S10.

Binds 16S rRNA, required for the assembly of 30S particles and may also be responsible for determining the conformation of the 16S rRNA at the A site. The polypeptide is Small ribosomal subunit protein uS14 (Methylorubrum populi (strain ATCC BAA-705 / NCIMB 13946 / BJ001) (Methylobacterium populi)).